The primary structure comprises 589 residues: Lipoprotein LpqB (589 aa).

The signal sequence occupies residues 1 to 20 (MMRGVLVIMRLLCLGMLFTG). The N-palmitoyl cysteine moiety is linked to residue Cys21. Cys21 carries S-diacylglycerol cysteine lipidation.

This sequence belongs to the LpqB lipoprotein family.

It localises to the cell membrane. This Mycobacterium leprae (strain TN) protein is Lipoprotein LpqB.